The following is a 116-amino-acid chain: MQRLMLKSKIHRATVTDADLHYEGSISIDEALMEAADLLPYEKVAIYDVNNGERFTTYVITGKRGSGVICLNGAAARKVAKGDLVIIASYVIVDGEEAKGWKPTCVFVDPENQIKH.

Residue serine 25 is the Schiff-base intermediate with substrate; via pyruvic acid of the active site. The residue at position 25 (serine 25) is a Pyruvic acid (Ser). Position 57 (threonine 57) interacts with substrate. Tyrosine 58 (proton donor) is an active-site residue. Position 73-75 (73-75) interacts with substrate; sequence GAA.

This sequence belongs to the PanD family. Heterooctamer of four alpha and four beta subunits. Requires pyruvate as cofactor. Is synthesized initially as an inactive proenzyme, which is activated by self-cleavage at a specific serine bond to produce a beta-subunit with a hydroxyl group at its C-terminus and an alpha-subunit with a pyruvoyl group at its N-terminus.

The protein localises to the cytoplasm. The enzyme catalyses L-aspartate + H(+) = beta-alanine + CO2. Its pathway is cofactor biosynthesis; (R)-pantothenate biosynthesis; beta-alanine from L-aspartate: step 1/1. Catalyzes the pyruvoyl-dependent decarboxylation of aspartate to produce beta-alanine. The protein is Aspartate 1-decarboxylase of Syntrophus aciditrophicus (strain SB).